The primary structure comprises 314 residues: Olfactory receptor 4Q2 (314 aa).

At 1–26 (MDKNQTEVMREFFLSGFSQTPSIEAG) the chain is on the extracellular side. Asn4 carries N-linked (GlcNAc...) asparagine glycosylation. Residues 27–47 (LFVLFLFFYMSIWVGNVLIMV) traverse the membrane as a helical segment. At 48–61 (TVASDKYLNSSPMY) the chain is on the cytoplasmic side. Residues 62–84 (FLLGNLSFLDLCYSTVTTPKLLA) traverse the membrane as a helical segment. Residues 85 to 98 (DFFNHEKLISYDQC) are Extracellular-facing. Cysteines 98 and 181 form a disulfide. A helical membrane pass occupies residues 99–119 (IVQLFFLHFVGAAEMFLLTVM). The Cytoplasmic segment spans residues 120-142 (AYDRYVAICRPLHYTTVMSRGLC). The chain crosses the membrane as a helical span at residues 143–163 (CVLVAASWMGGFVHSTVQTIL). The Extracellular portion of the chain corresponds to 164 to 196 (TVHLPFCGPNQVENTFFCDVPPVIKLACADTFV). A helical membrane pass occupies residues 197-217 (IELLMVSNSGLISTISFVVLI). Over 218–236 (SSYTTILVKIRSKEGRRKA) the chain is Cytoplasmic. The helical transmembrane segment at 237 to 257 (LSTCASHLMVVTLFFGPCIFI) threads the bilayer. Residues 258–268 (YARPFSTFSVD) are Extracellular-facing. Residues 269–289 (KMVSVLYNVITPMLNPLIYTL) form a helical membrane-spanning segment. The Cytoplasmic segment spans residues 290–314 (RNKEVKSAMQKLWVRNGLTWKKQET).

Belongs to the G-protein coupled receptor 1 family.

Its subcellular location is the cell membrane. Its function is as follows. Odorant receptor. The sequence is that of Olfactory receptor 4Q2 (OR4Q2) from Homo sapiens (Human).